The chain runs to 225 residues: Imidazole glycerol phosphate synthase subunit HisH (225 aa).

The 223-residue stretch at Thr-3–Pro-225 folds into the Glutamine amidotransferase type-1 domain. Catalysis depends on Cys-82, which acts as the Nucleophile. Active-site residues include His-205 and Glu-207.

Heterodimer of HisH and HisF.

The protein resides in the cytoplasm. The enzyme catalyses 5-[(5-phospho-1-deoxy-D-ribulos-1-ylimino)methylamino]-1-(5-phospho-beta-D-ribosyl)imidazole-4-carboxamide + L-glutamine = D-erythro-1-(imidazol-4-yl)glycerol 3-phosphate + 5-amino-1-(5-phospho-beta-D-ribosyl)imidazole-4-carboxamide + L-glutamate + H(+). It carries out the reaction L-glutamine + H2O = L-glutamate + NH4(+). It participates in amino-acid biosynthesis; L-histidine biosynthesis; L-histidine from 5-phospho-alpha-D-ribose 1-diphosphate: step 5/9. IGPS catalyzes the conversion of PRFAR and glutamine to IGP, AICAR and glutamate. The HisH subunit catalyzes the hydrolysis of glutamine to glutamate and ammonia as part of the synthesis of IGP and AICAR. The resulting ammonia molecule is channeled to the active site of HisF. This is Imidazole glycerol phosphate synthase subunit HisH from Bordetella pertussis (strain Tohama I / ATCC BAA-589 / NCTC 13251).